The following is a 68-amino-acid chain: MDENEYDEYTQISWSDTIKGLIKDPESRNSILENLKNISVFIASSMIIAKYAHKICEPQLLSKILFES.

This is an uncharacterized protein from Dictyostelium discoideum (Social amoeba).